Consider the following 653-residue polypeptide: Fusexin 1 (653 aa).

The N-terminal stretch at 1 to 24 (MKRVGNCWKASVAAFFLLMFTAFA) is a signal peptide. The Extracellular segment spans residues 25-559 (AADTTSVDTV…FENIWSGDAN (535 aa)). 4 disulfides stabilise this stretch: Cys129–Cys167, Cys398–Cys441, Cys468–Cys487, and Cys499–Cys516. Residues 155-160 (DYWTGS) form a fusion loop region. The helical transmembrane segment at 560 to 580 (ALNWLQVFVTFIAFLGGFALV) threads the bilayer. The Cytoplasmic segment spans residues 581–604 (GVKLGKIVDGLATEFIPVKDSHVR). The next 2 helical transmembrane spans lie at 605-625 (LVIG…LVTD) and 626-646 (PLGL…YLSA). The Cytoplasmic portion of the chain corresponds to 647–653 (SAPEINL).

This sequence belongs to the HAP2/GCS1 family. Fusexin 1 subfamily. As to quaternary structure, homotrimer stabilized by interdomain contacts and numerous Ca(2+) and Na(+) ions.

The protein resides in the cell surface. It is found in the cell membrane. Its function is as follows. Exhibits fusogenic activity. Mediates cell-cell fusion in mammalian cells (bilateral fusion). The sequence is that of Fusexin 1 from Haloplanus natans (strain DSM 17983 / JCM 14081 / CGMCC 1.8972 / RE-101).